A 144-amino-acid polypeptide reads, in one-letter code: Transcription antitermination protein NusB (144 aa).

It belongs to the NusB family.

Its function is as follows. Involved in transcription antitermination. Required for transcription of ribosomal RNA (rRNA) genes. Binds specifically to the boxA antiterminator sequence of the ribosomal RNA (rrn) operons. In Histophilus somni (strain 2336) (Haemophilus somnus), this protein is Transcription antitermination protein NusB.